A 646-amino-acid chain; its full sequence is Kinesin-like protein klp-20 (646 aa).

The Kinesin motor domain occupies 6–331 (KVKVVVRCRP…LRYANRAKNI (326 aa)). ATP is bound at residue 91 to 98 (GQTGTGKT). Residues 342 to 552 (KDAQLRKFQL…LRKELLLNIA (211 aa)) adopt a coiled-coil conformation. The interval 525–550 (LEEDHQRQVEAMLDDIRQLRKELLLN) is interaction with klp-11. The interval 623-646 (TAEHRPRTSSKKHRASIRLQQLLT) is disordered. Residues 629–638 (RTSSKKHRAS) show a composition bias toward basic residues.

Belongs to the TRAFAC class myosin-kinesin ATPase superfamily. Kinesin family. Kinesin II subfamily. Component of the kinesin II motor complex, a heterotrimeric complex composed of kap-1, klp-11 and klp-20. Interacts (via C-terminus) with klp-11 (via C-terminus) to form a heterodimer. Furthermore, within the heterodimer, the C-termini of klp-20 and klp-11 interact to form a coiled coil (stalk) or tail domain, and this is necessary for association with kap-1, and kinesin II motor complex activity upon IFT cargo binding. Prior to cargo binding, the klp-11/klp-20 heterodimer is autoinhibited by the tail domain of the heterodimer, which folds onto the kinesin motor domain. Cargo binding to the heterodimer relieves the autoinhibition, and allows for an extended conformation of the tail domain, and function of the heterodimer.

It localises to the cell projection. It is found in the cilium. Its subcellular location is the cytoplasm. The protein localises to the cytoskeleton. Its function is as follows. Component of the kinesin II motor complex (composed of kap-1 and the heterodimeric motor proteins klp-11 and klp-20) which is required for intraflagellar transport (IFT). Heterodimerizes with klp-11 to form a 'processive' molecular motor upon IFT cargo binding, which, within the kinesin II motor complex, binds to and moves along microtubules in a unidirectional manner (without dissociation of the heterodimer), and in turn, is responsible for the IFT of cargo. Specifically, the kinesin II motor complex, together with the kinesin motor protein osm-3 moves along microtubules and is required for anterograde IFT along the middle segment of the sensory neuron cilia. In particular, the kinesin II motor complex delivers specific ciliary cargo proteins such as che-3 which are related to motility to ciliary tips. This is likely mediated by IFT complexes A and B. The sequence is that of Kinesin-like protein klp-20 from Caenorhabditis elegans.